The sequence spans 1235 residues: Phosphorylase b kinase regulatory subunit alpha, liver isoform (1235 aa).

The tract at residues 636 to 655 (FSPDSEPDLGGYLEDSSPQE) is disordered. 3 positions are modified to phosphoserine: serine 695, serine 729, and serine 735. A calmodulin-binding region spans residues 807 to 837 (LSELYGKAGLNQEWSLIRYISGLLRKKVEVL). Residues serine 983, serine 1015, and serine 1044 each carry the phosphoserine modification. The tract at residues 1033-1060 (SIKSVRSSTPSSPTGTSSTDSGGQHLGW) is disordered. Over residues 1039–1055 (SSTPSSPTGTSSTDSGG) the composition is skewed to low complexity. The interval 1059–1099 (GWGEQQGQWLRRRRLDGAINRVPVGFYQKVWKILQKCHGLS) is calmodulin-binding. The S-farnesyl cysteine moiety is linked to residue cysteine 1232.

Belongs to the phosphorylase b kinase regulatory chain family. In terms of assembly, hexadecamer of 4 heterotetramers, each composed of alpha, beta, gamma, and delta subunits. Alpha (PHKA1 or PHKA2) and beta (PHKB) are regulatory subunits, gamma (PHKG1 or PHKG2) is the catalytic subunit, and delta is calmodulin. Post-translationally, although the final Cys may be farnesylated, the terminal tripeptide is probably not removed, and the C-terminus is not methylated.

It is found in the cell membrane. Its pathway is glycan biosynthesis; glycogen metabolism. With respect to regulation, by phosphorylation of various serine residues and by calcium. In terms of biological role, phosphorylase b kinase catalyzes the phosphorylation of serine in certain substrates, including troponin I. The alpha chain may bind calmodulin. The sequence is that of Phosphorylase b kinase regulatory subunit alpha, liver isoform (Phka2) from Mus musculus (Mouse).